The following is a 356-amino-acid chain: Putative methylthioribose-1-phosphate isomerase (356 aa).

Residues 57-59 (RGA), R100, and Q206 each bind substrate. Catalysis depends on D247, which acts as the Proton donor. A substrate-binding site is contributed by 257–258 (NK).

It belongs to the eIF-2B alpha/beta/delta subunits family. MtnA subfamily.

It carries out the reaction 5-(methylsulfanyl)-alpha-D-ribose 1-phosphate = 5-(methylsulfanyl)-D-ribulose 1-phosphate. In terms of biological role, catalyzes the interconversion of methylthioribose-1-phosphate (MTR-1-P) into methylthioribulose-1-phosphate (MTRu-1-P). This is Putative methylthioribose-1-phosphate isomerase from Pyrococcus furiosus (strain ATCC 43587 / DSM 3638 / JCM 8422 / Vc1).